The chain runs to 478 residues: Protein nucleotidyltransferase YdiU (478 aa).

Glycine 84, glycine 86, arginine 87, lysine 107, aspartate 119, glycine 120, arginine 170, and arginine 177 together coordinate ATP. Aspartate 246 acts as the Proton acceptor in catalysis. Positions 247 and 256 each coordinate Mg(2+). Aspartate 256 serves as a coordination point for ATP.

The protein belongs to the SELO family. Mg(2+) is required as a cofactor. Requires Mn(2+) as cofactor.

The catalysed reaction is L-seryl-[protein] + ATP = 3-O-(5'-adenylyl)-L-seryl-[protein] + diphosphate. It carries out the reaction L-threonyl-[protein] + ATP = 3-O-(5'-adenylyl)-L-threonyl-[protein] + diphosphate. The enzyme catalyses L-tyrosyl-[protein] + ATP = O-(5'-adenylyl)-L-tyrosyl-[protein] + diphosphate. It catalyses the reaction L-histidyl-[protein] + UTP = N(tele)-(5'-uridylyl)-L-histidyl-[protein] + diphosphate. The catalysed reaction is L-seryl-[protein] + UTP = O-(5'-uridylyl)-L-seryl-[protein] + diphosphate. It carries out the reaction L-tyrosyl-[protein] + UTP = O-(5'-uridylyl)-L-tyrosyl-[protein] + diphosphate. Functionally, nucleotidyltransferase involved in the post-translational modification of proteins. It can catalyze the addition of adenosine monophosphate (AMP) or uridine monophosphate (UMP) to a protein, resulting in modifications known as AMPylation and UMPylation. The protein is Protein nucleotidyltransferase YdiU of Escherichia coli O127:H6 (strain E2348/69 / EPEC).